Consider the following 942-residue polypeptide: Ubiquitin carboxyl-terminal hydrolase 33 (942 aa).

The segment at Asn-37–His-140 adopts a UBP-type zinc-finger fold. Zn(2+) is bound by residues Cys-39, His-41, Cys-61, Cys-64, Cys-74, Cys-79, Cys-84, His-91, His-95, His-101, Cys-114, and Cys-117. A USP domain is found at Thr-185–Ser-715. The active-site Nucleophile is Cys-194. The disordered stretch occupies residues Val-294 to Ser-357. Residues Asp-315 to Ser-327 show a composition bias toward polar residues. Ser-377 is modified (phosphoserine). Positions Asp-419 to Gly-431 are enriched in polar residues. Positions Asp-419–Lys-469 are disordered. At Ser-439 the chain carries Phosphoserine. Residues Pro-453–Lys-469 show a composition bias toward basic residues. His-673 acts as the Proton acceptor in catalysis. DUSP domains follow at residues Glu-717–Cys-810 and Glu-818–Val-921.

The protein belongs to the peptidase C19 family. USP20/USP33 subfamily. As to quaternary structure, interacts with VHL, leading to its ubiquitination and subsequent degradation. Interacts with ARRB1 and ARRB2. Interacts with ADRB2. Interacts with DIO2. Interacts with ROBO1. Interacts with SELENBP1; in a selenium-dependent manner. Interacts with CCP110. Ubiquitinated via a VHL-dependent pathway for proteasomal degradation. In terms of tissue distribution, widely expressed.

The protein resides in the cytoplasm. It localises to the perinuclear region. It is found in the cytoskeleton. Its subcellular location is the microtubule organizing center. The protein localises to the centrosome. The protein resides in the golgi apparatus. It catalyses the reaction Thiol-dependent hydrolysis of ester, thioester, amide, peptide and isopeptide bonds formed by the C-terminal Gly of ubiquitin (a 76-residue protein attached to proteins as an intracellular targeting signal).. Deubiquitinating enzyme involved in various processes such as centrosome duplication, cellular migration and beta-2 adrenergic receptor/ADRB2 recycling. Involved in regulation of centrosome duplication by mediating deubiquitination of CCP110 in S and G2/M phase, leading to stabilize CCP110 during the period which centrioles duplicate and elongate. Involved in cell migration via its interaction with intracellular domain of ROBO1, leading to regulate the Slit signaling. Plays a role in commissural axon guidance cross the ventral midline of the neural tube in a Slit-dependent manner, possibly by mediating the deubiquitination of ROBO1. Acts as a regulator of G-protein coupled receptor (GPCR) signaling by mediating the deubiquitination of beta-arrestins (ARRB1 and ARRB2) and beta-2 adrenergic receptor (ADRB2). Plays a central role in ADRB2 recycling and resensitization after prolonged agonist stimulation by constitutively binding ADRB2, mediating deubiquitination of ADRB2 and inhibiting lysosomal trafficking of ADRB2. Upon dissociation, it is probably transferred to the translocated beta-arrestins, leading to beta-arrestins deubiquitination and disengagement from ADRB2. This suggests the existence of a dynamic exchange between the ADRB2 and beta-arrestins. Deubiquitinates DIO2, thereby regulating thyroid hormone regulation. Mediates deubiquitination of both 'Lys-48'- and 'Lys-63'-linked polyubiquitin chains. The chain is Ubiquitin carboxyl-terminal hydrolase 33 (USP33) from Homo sapiens (Human).